The sequence spans 874 residues: Ectonucleotide pyrophosphatase/phosphodiesterase family member 3 (874 aa).

Over 1-11 (MDSRLALATEE) the chain is Cytoplasmic. A helical; Signal-anchor for type II membrane protein membrane pass occupies residues 12 to 30 (PIKKDSLKKYKILCVVLLA). Topologically, residues 31 to 874 (LLVIVSLGLG…TYLPTFETII (844 aa)) are extracellular. SMB domains are found at residues 51-93 (QGSC…VKST) and 94-138 (QIWT…GESP). Disulfide bonds link C54–C58, C54–C71, C58–C89, C69–C71, C69–C82, C75–C81, C82–C89, C98–C115, C103–C133, C113–C126, C119–C125, C144–C190, and C152–C364. A Cell attachment site motif is present at residues 78-80 (RGD). A phosphodiesterase region spans residues 160 to 544 (PVILFSMDGF…HGSLNHLLKT (385 aa)). D167 serves as a coordination point for Zn(2+). Residue K204 coordinates ATP. T205 serves as a coordination point for Zn(2+). T205 serves as the catalytic Nucleophile. N226 provides a ligand contact to ATP. A glycan (N-linked (GlcNAc...) asparagine) is linked at N236. D275 lines the ATP pocket. Residues N279 and N288 are each glycosylated (N-linked (GlcNAc...) asparagine). Residue Y289 participates in ATP binding. Residues D325, H329, D372, and H373 each contribute to the Zn(2+) site. 6 disulfide bridges follow: C380-C477, C428-C817, C561-C623, C574-C679, C576-C664, and C786-C796. N425 carries an N-linked (GlcNAc...) asparagine glycan. Residue H482 participates in Zn(2+) binding. 4 N-linked (GlcNAc...) asparagine glycosylation sites follow: N532, N594, N687, and N701. The interval 581–874 (NTPGLEEQAN…TYLPTFETII (294 aa)) is nuclease. Ca(2+)-binding residues include D751, N753, D755, H757, and D759. Residue N820 is glycosylated (N-linked (GlcNAc...) asparagine).

Monomer and homodimer. Zn(2+) serves as cofactor. In terms of processing, N-glycosylated. N-glycosylation is necessary for normal transport to the cell membrane, but is not the apical targeting signal. In terms of tissue distribution, detected at the tip of villi in the small intestine. Detected on basophils and mast cells (at protein level). Detected in the epithelial layer of the small intestine; expression is higher in the proximal part and lower in the distal part of the small intestine.

It is found in the cell membrane. It localises to the apical cell membrane. The protein resides in the secreted. It catalyses the reaction a ribonucleoside 5'-triphosphate + H2O = a ribonucleoside 5'-phosphate + diphosphate + H(+). The catalysed reaction is UDP-N-acetyl-alpha-D-glucosamine + H2O = N-acetyl-alpha-D-glucosamine 1-phosphate + UMP + 2 H(+). It carries out the reaction ATP + H2O = AMP + diphosphate + H(+). The enzyme catalyses CTP + H2O = CMP + diphosphate + H(+). It catalyses the reaction GTP + H2O = GMP + diphosphate + H(+). The catalysed reaction is UTP + H2O = UMP + diphosphate + H(+). It carries out the reaction Hydrolytically removes 5'-nucleotides successively from the 3'-hydroxy termini of 3'-hydroxy-terminated oligonucleotides.. The enzyme catalyses P(1),P(3)-bis(5'-adenosyl) triphosphate + H2O = AMP + ADP + 2 H(+). It catalyses the reaction P(1),P(4)-bis(5'-adenosyl) tetraphosphate + H2O = AMP + ATP + 2 H(+). The catalysed reaction is P(1),P(5)-bis(5'-adenosyl) pentaphosphate + H2O = adenosine 5'-tetraphosphate + AMP + 2 H(+). It carries out the reaction P(1),P(4)-bis(5'-guanosyl) tetraphosphate + H2O = GMP + GTP + 2 H(+). In terms of biological role, hydrolase that metabolizes extracellular nucleotides, including ATP, GTP, UTP and CTP. Limits mast cells and basophils response during inflammation and during the chronic phases of allergic responses by eliminating extracellular ATP, a signaling molecule activating these cells in an autocrine manner. Metabolizes extracellular ATP in the lumen of the small intestine, and thereby prevents ATP-induced apoptosis of intestinal plasmacytoid dendritic cells. Has a broad specificity and can also hydrolyze UDP-GlcNAc into UMP and GlcNAc-1-phosphate and potentially several other intracellular nucleotide sugars, including UDP-GalNAc, CMP-NeuAc, GDP-Fuc, and UDP-GlcA. Thereby, could modulate glycan biosynthesis and protein glycosylation. Can hydrolyze extracellular dinucleoside polyphosphates, including the vasoactive adenosine polyphosphates as well. In addition, displays an alkaline phosphodiesterase activity in vitro. This chain is Ectonucleotide pyrophosphatase/phosphodiesterase family member 3, found in Mus musculus (Mouse).